The chain runs to 597 residues: Arginine--tRNA ligase (597 aa).

The 'HIGH' region motif lies at 125–135; that stretch reads PNTNKPLHLGH.

It belongs to the class-I aminoacyl-tRNA synthetase family. Monomer.

Its subcellular location is the cytoplasm. It catalyses the reaction tRNA(Arg) + L-arginine + ATP = L-arginyl-tRNA(Arg) + AMP + diphosphate. This chain is Arginine--tRNA ligase, found in Porphyromonas gingivalis (strain ATCC BAA-308 / W83).